Here is a 336-residue protein sequence, read N- to C-terminus: UDP-glucose 4-epimerase (336 aa).

NAD(+) contacts are provided by residues 11–12 (YI), 31–36 (DNLINS), 58–59 (DI), 80–84 (FAGLK), asparagine 99, serine 124, tyrosine 149, lysine 153, and phenylalanine 178. Substrate contacts are provided by serine 124 and tyrosine 149. Catalysis depends on tyrosine 149, which acts as the Proton acceptor. Residues asparagine 179, 199-200 (NL), 216-218 (LVY), arginine 231, and 290-293 (RPGD) contribute to the substrate site.

Belongs to the NAD(P)-dependent epimerase/dehydratase family. Homodimer. Requires NAD(+) as cofactor.

It carries out the reaction UDP-alpha-D-glucose = UDP-alpha-D-galactose. The protein operates within carbohydrate metabolism; galactose metabolism. Its function is as follows. Involved in the metabolism of galactose. Catalyzes the conversion of UDP-galactose (UDP-Gal) to UDP-glucose (UDP-Glc) through a mechanism involving the transient reduction of NAD. The protein is UDP-glucose 4-epimerase (galE) of Yersinia enterocolitica.